The chain runs to 523 residues: Probable glucose-1-phosphate adenylyltransferase large subunit, chloroplastic (523 aa).

Belongs to the bacterial/plant glucose-1-phosphate adenylyltransferase family. Heterotetramer.

It localises to the plastid. The protein localises to the chloroplast. The enzyme catalyses alpha-D-glucose 1-phosphate + ATP + H(+) = ADP-alpha-D-glucose + diphosphate. It participates in glycan biosynthesis; starch biosynthesis. Activated by 3'phosphoglycerate, inhibited by orthophosphate. Allosteric regulation. Functionally, this protein plays a role in synthesis of starch. It catalyzes the synthesis of the activated glycosyl donor, ADP-glucose from Glc-1-P and ATP. The protein is Probable glucose-1-phosphate adenylyltransferase large subunit, chloroplastic of Arabidopsis thaliana (Mouse-ear cress).